A 455-amino-acid polypeptide reads, in one-letter code: Argininosuccinate lyase (455 aa).

It belongs to the lyase 1 family. Argininosuccinate lyase subfamily.

It localises to the cytoplasm. It catalyses the reaction 2-(N(omega)-L-arginino)succinate = fumarate + L-arginine. It participates in amino-acid biosynthesis; L-arginine biosynthesis; L-arginine from L-ornithine and carbamoyl phosphate: step 3/3. The protein is Argininosuccinate lyase of Caulobacter vibrioides (strain ATCC 19089 / CIP 103742 / CB 15) (Caulobacter crescentus).